The sequence spans 330 residues: Transcription factor TGA5 (330 aa).

Residues 1–13 are compositionally biased toward polar residues; that stretch reads MGDTSPRTSVSTD. Residues 1 to 64 are disordered; the sequence is MGDTSPRTSV…REAARKSRLR (64 aa). Positions 35 to 47 are enriched in basic and acidic residues; the sequence is SSDRSKSKMDQKT. A bZIP domain is found at 44 to 107; the sequence is DQKTLRRLAQ…SSGDQAHSTA (64 aa). Coiled-coil stretches lie at residues 45-98 and 211-244; these read QKTL…FISS and EQQS…SLAD. A basic motif region spans residues 46-66; the sequence is KTLRRLAQNREAARKSRLRKK. The interval 72–86 is leucine-zipper; that stretch reads LENSRLKLTQLEQEL. Residues 111 to 327 form the DOG1 domain; that stretch reads AMAFDVEYRR…RALSSLWLAR (217 aa).

The protein belongs to the bZIP family. As to quaternary structure, binds DNA as a dimer. Interaction with the Dof domain protein OBP1 enhances the binding to the ocs element. Interacts with NPR1, NPR3 and NPR4. In terms of tissue distribution, predominantly expressed in roots.

It is found in the nucleus. Functionally, transcriptional activator that binds specifically to the DNA sequence 5'-TGACG-3'. Recognizes ocs elements like the as-1 motif of the cauliflower mosaic virus 35S promoter. Binding to the as-1-like cis elements mediate auxin- and salicylic acid-inducible transcription. May be involved in the induction of the systemic acquired resistance (SAR) via its interaction with NPR1. Could also bind to the Hex-motif (5'-TGACGTGG-3') another cis-acting element found in plant histone promoters. The sequence is that of Transcription factor TGA5 (TGA5) from Arabidopsis thaliana (Mouse-ear cress).